Reading from the N-terminus, the 146-residue chain is Snake venom vascular endothelial growth factor toxin (146 aa).

The first 24 residues, 1–24, serve as a signal peptide directing secretion; the sequence is MAAYLLAVAILFCIQGWPLGTVQG. Glutamine 25 bears the Pyrrolidone carboxylic acid mark. 3 cysteine pairs are disulfide-bonded: cysteine 38–cysteine 80, cysteine 69–cysteine 115, and cysteine 73–cysteine 117. A disordered region spans residues 118-146; sequence RPRSASGVNSRKHKRNPEEGEQRAKFPFV. Basic and acidic residues predominate over residues 133-146; that stretch reads NPEEGEQRAKFPFV.

The protein belongs to the PDGF/VEGF growth factor family. Snake venom VEGF subfamily. As to quaternary structure, homodimer; disulfide-linked. Interacts with VEGF receptor-1 (FLT1) with a high affinity, whereas it binds to VEGF receptor-2 (KDR) with a low affinity. Does not bind VEGF receptor-3 (FLT4). As to expression, expressed by the venom gland.

The protein localises to the secreted. Its function is as follows. Snake venom VEGFs that may contribute to venom dispersion and prey subjugation by inducing vascular permeability and hypotension. This protein induces an increase in capillary permeability after intradermal injection, as well as a drastic hypotensive effect after intravenous injection. The hypotension is mediated by nitric oxide (NO), which is produced by VEGF-activated endothelium NO synthase. Also induces angiogenesis in vitro. Like other crotalid VEGFs, this protein interacts with VEGF receptor-1 (FLT1) with a high affinity, whereas it binds to VEGF receptor-2 (KDR) with a low affinity. In Bothrops erythromelas (Caatinga lance head), this protein is Snake venom vascular endothelial growth factor toxin.